A 305-amino-acid polypeptide reads, in one-letter code: Tyrosine recombinase XerD (305 aa).

The region spanning 2 to 87 is the Core-binding (CB) domain; it reads SQGEAWADAF…AVRQFYRFVL (86 aa). The 188-residue stretch at 108 to 295 folds into the Tyr recombinase domain; it reads PLPKVLERDE…AGEHLAHIVQ (188 aa). Active-site residues include R149, K173, H247, R250, and H273. Y282 serves as the catalytic O-(3'-phospho-DNA)-tyrosine intermediate.

The protein belongs to the 'phage' integrase family. XerD subfamily. As to quaternary structure, forms a cyclic heterotetrameric complex composed of two molecules of XerC and two molecules of XerD.

It is found in the cytoplasm. In terms of biological role, site-specific tyrosine recombinase, which acts by catalyzing the cutting and rejoining of the recombining DNA molecules. The XerC-XerD complex is essential to convert dimers of the bacterial chromosome into monomers to permit their segregation at cell division. It also contributes to the segregational stability of plasmids. The polypeptide is Tyrosine recombinase XerD (Caulobacter vibrioides (strain ATCC 19089 / CIP 103742 / CB 15) (Caulobacter crescentus)).